The chain runs to 322 residues: Mycothiol acetyltransferase (322 aa).

2 consecutive N-acetyltransferase domains span residues 5-150 and 160-322; these read SWLR…DPDD and VTIR…PARG. Glu36 is a 1D-myo-inositol 2-(L-cysteinylamino)-2-deoxy-alpha-D-glucopyranoside binding site. Acetyl-CoA-binding positions include 79-81 and 87-92; these read LVV and RRGVGT. Residues Glu187, Lys226, and Glu252 each contribute to the 1D-myo-inositol 2-(L-cysteinylamino)-2-deoxy-alpha-D-glucopyranoside site. Acetyl-CoA is bound at residue 256-258; it reads VGV. Tyr290 provides a ligand contact to 1D-myo-inositol 2-(L-cysteinylamino)-2-deoxy-alpha-D-glucopyranoside. 295–300 contributes to the acetyl-CoA binding site; the sequence is NARAVR.

The protein belongs to the acetyltransferase family. MshD subfamily. In terms of assembly, monomer.

It carries out the reaction 1D-myo-inositol 2-(L-cysteinylamino)-2-deoxy-alpha-D-glucopyranoside + acetyl-CoA = mycothiol + CoA + H(+). Functionally, catalyzes the transfer of acetyl from acetyl-CoA to desacetylmycothiol (Cys-GlcN-Ins) to form mycothiol. This is Mycothiol acetyltransferase from Parafrankia sp. (strain EAN1pec).